The chain runs to 156 residues: Endoribonuclease YbeY (156 aa).

The Zn(2+) site is built by His-122, His-126, and His-132.

Belongs to the endoribonuclease YbeY family. Zn(2+) is required as a cofactor.

It localises to the cytoplasm. Its function is as follows. Single strand-specific metallo-endoribonuclease involved in late-stage 70S ribosome quality control and in maturation of the 3' terminus of the 16S rRNA. The sequence is that of Endoribonuclease YbeY from Bacillus cereus (strain ATCC 14579 / DSM 31 / CCUG 7414 / JCM 2152 / NBRC 15305 / NCIMB 9373 / NCTC 2599 / NRRL B-3711).